The chain runs to 60 residues: Large ribosomal subunit protein uL30 (60 aa).

It belongs to the universal ribosomal protein uL30 family. In terms of assembly, part of the 50S ribosomal subunit.

The protein is Large ribosomal subunit protein uL30 of Flavobacterium johnsoniae (strain ATCC 17061 / DSM 2064 / JCM 8514 / BCRC 14874 / CCUG 350202 / NBRC 14942 / NCIMB 11054 / UW101) (Cytophaga johnsonae).